Reading from the N-terminus, the 139-residue chain is D-ribose pyranase (139 aa).

Catalysis depends on H20, which acts as the Proton donor. Substrate is bound by residues D28, H106, and Y128–N130.

It belongs to the RbsD / FucU family. RbsD subfamily. As to quaternary structure, homodecamer.

The protein localises to the cytoplasm. It carries out the reaction beta-D-ribopyranose = beta-D-ribofuranose. The protein operates within carbohydrate metabolism; D-ribose degradation; D-ribose 5-phosphate from beta-D-ribopyranose: step 1/2. Functionally, catalyzes the interconversion of beta-pyran and beta-furan forms of D-ribose. The chain is D-ribose pyranase from Shewanella pealeana (strain ATCC 700345 / ANG-SQ1).